A 410-amino-acid polypeptide reads, in one-letter code: MAWADKYRPVDISELIMPSDELNSIIRWADSWRNNEVIKKSLILYGDPGTGKTTTATVIANYLNVPLIEMNASDERNADSMKRVALMSSLYSDLLSERRIPDRLILIDEADNIFESRDPKRGGDYGGITELLNVVKETRNPVIITMNDYYSFRSKRSGREIIDNSLVIEMRPYRRRNDQRYREFINKCLERCHYILKKEGKSLPENDIIRIIKENEPDIRSIINDLEAYAQDSNPGTRNKKIDIYRYVIDTFHSHDYDKLINSFSDADFDPDYYIKWIDQNLKEEYQDPEDLKNAYDILSIADLYSRLSYRANYMLTGISQEIAAGVSLMVKNKNRSTGRYSMPDIIKMYSSRKGINGARTLLEKLAALNHTSSNVIVSYLWFYRIIKRTAEFKRISRILDLSDNEVKQI.

46-53 (GDPGTGKT) provides a ligand contact to ATP.

Belongs to the activator 1 small subunits family. RfcL subfamily. Heteromultimer composed of small subunits (RfcS) and large subunits (RfcL).

Part of the RFC clamp loader complex which loads the PCNA sliding clamp onto DNA. This chain is Replication factor C large subunit, found in Picrophilus torridus (strain ATCC 700027 / DSM 9790 / JCM 10055 / NBRC 100828 / KAW 2/3).